Consider the following 317-residue polypeptide: Melanocyte-stimulating hormone receptor (317 aa).

Residues 1–37 (MPVLGSQRRLLGSLNCTPPATLPLTLAPNRTGPQCLE) lie on the Extracellular side of the membrane. N29 carries N-linked (GlcNAc...) asparagine glycosylation. The helical transmembrane segment at 38 to 63 (VSIPDGLFLSLGLVSLVENVLVVAAI) threads the bilayer. Residues 64–72 (AKNRNLHSP) are Cytoplasmic-facing. A helical membrane pass occupies residues 73–93 (MYYFICCLAMSDLLVSVSNVL). The Extracellular portion of the chain corresponds to 94–118 (ETAVMLLLEAGVLATRAAVVQQLDN). A helical transmembrane segment spans residues 119-140 (VIDVLICSSMVSSLCFLGAIAV). At 141–163 (DRYISIFYALRYHSVVTLPRAWR) the chain is on the cytoplasmic side. Residues 164–183 (IIAAIWVASILTSVLSITYY) traverse the membrane as a helical segment. Topologically, residues 184–191 (NHTVVLLC) are extracellular. A helical transmembrane segment spans residues 192–211 (LVGFFIAMLALMAVLYVHML). The Cytoplasmic segment spans residues 212–240 (ARACQHARGIARLQKRQRPIHQGFGLKGA). A helical transmembrane segment spans residues 241-266 (ATLTILLGVFFLCWGPFFLHLSLIVL). Residues 267-279 (CPQHPTCGCIFKN) are Extracellular-facing. The chain crosses the membrane as a helical span at residues 280–300 (FNLFLALIICNAIVDPLIYAF). At 301–317 (RSQELRKTLQEVLQCSW) the chain is on the cytoplasmic side. The S-palmitoyl cysteine moiety is linked to residue C315.

The protein belongs to the G-protein coupled receptor 1 family. In terms of assembly, interacts with MGRN1, but does not undergo MGRN1-mediated ubiquitination; this interaction competes with GNAS-binding and thus inhibits agonist-induced cAMP production. Interacts with OPN3; the interaction results in a decrease in MC1R-mediated cAMP signaling and ultimately a decrease in melanin production in melanocytes.

It is found in the cell membrane. Receptor for MSH (alpha, beta and gamma) and ACTH. The activity of this receptor is mediated by G proteins which activate adenylate cyclase. Mediates melanogenesis, the production of eumelanin (black/brown) and phaeomelanin (red/yellow), via regulation of cAMP signaling in melanocytes. The polypeptide is Melanocyte-stimulating hormone receptor (MC1R) (Ovis aries (Sheep)).